We begin with the raw amino-acid sequence, 399 residues long: Nicotinate phosphoribosyltransferase (399 aa).

H217 is modified (phosphohistidine; by autocatalysis).

The protein belongs to the NAPRTase family. In terms of processing, transiently phosphorylated on a His residue during the reaction cycle. Phosphorylation strongly increases the affinity for substrates and increases the rate of nicotinate D-ribonucleotide production. Dephosphorylation regenerates the low-affinity form of the enzyme, leading to product release.

The enzyme catalyses nicotinate + 5-phospho-alpha-D-ribose 1-diphosphate + ATP + H2O = nicotinate beta-D-ribonucleotide + ADP + phosphate + diphosphate. The protein operates within cofactor biosynthesis; NAD(+) biosynthesis; nicotinate D-ribonucleotide from nicotinate: step 1/1. Functionally, catalyzes the synthesis of beta-nicotinate D-ribonucleotide from nicotinate and 5-phospho-D-ribose 1-phosphate at the expense of ATP. In Burkholderia mallei (strain ATCC 23344), this protein is Nicotinate phosphoribosyltransferase.